The following is a 40-amino-acid chain: RNA replication protein (40 aa).

Belongs to the potexviruses/carlaviruses RNA replication protein family.

The enzyme catalyses RNA(n) + a ribonucleoside 5'-triphosphate = RNA(n+1) + diphosphate. The catalysed reaction is ATP + H2O = ADP + phosphate + H(+). Its function is as follows. RNA replication. The central part of this protein possibly functions as an ATP-binding helicase. In Lily symptomless virus (LSV), this protein is RNA replication protein.